Reading from the N-terminus, the 71-residue chain is UPF0346 protein BCB4264_A2283 (71 aa).

It belongs to the UPF0346 family.

In Bacillus cereus (strain B4264), this protein is UPF0346 protein BCB4264_A2283.